Here is a 71-residue protein sequence, read N- to C-terminus: MPKQLKEIKEFLLTARRKDAKSVKIKKNPDNVTKFKVRCSKYLYTIVVTEKEKAEKLKQSLPPGLQVKELK.

Belongs to the eukaryotic ribosomal protein eL38 family.

The sequence is that of Large ribosomal subunit protein eL38 (RpL38) from Ixodes scapularis (Black-legged tick).